The primary structure comprises 151 residues: Large ribosomal subunit protein bL9 (151 aa).

Belongs to the bacterial ribosomal protein bL9 family.

Functionally, binds to the 23S rRNA. The polypeptide is Large ribosomal subunit protein bL9 (Chlorobium chlorochromatii (strain CaD3)).